The chain runs to 132 residues: Major pollen allergen Art v 1 (132 aa).

A signal peptide spans Met-1 to Ala-24. A defensin-like domain region spans residues Lys-28–Cys-77. 4 disulfides stabilise this stretch: Cys-30–Cys-77, Cys-41–Cys-61, Cys-46–Cys-71, and Cys-50–Cys-73. Epitope recognized by IgE antibodies of mugwort pollen-sensitized patients regions lie at residues Arg-64–Ser-70 and Lys-79–Ala-87. The disordered stretch occupies residues Pro-81–His-132. Over residues Gly-83–Ala-114 the composition is skewed to pro residues. The span at Asp-115 to Gly-124 shows a compositional bias: low complexity.

It in the N-terminal section; belongs to the DEFL family. In terms of processing, the mature protein extracted from the plant exhibits an average rate of 76% of hydroxyprolines. Post-translationally, O-glycosylated. O-linkage of 3 galactoses plus 9-16 or 21-23 arabinose residues attached on one or two hydroxyprolines.

The protein resides in the secreted. This chain is Major pollen allergen Art v 1, found in Artemisia vulgaris (Mugwort).